A 343-amino-acid chain; its full sequence is MYNLARQLLFKLSPETSHDLSLDLIGAGGRLGLNGLLGKSAAKLPVSVMGLEFPNPVGLAAGLDKNGAAIDGFAQLGFGFVEIGTVTPRPQPGNPKPRIFRLPNAEAIINRMGFNNLGVDNLVSRVEAAKYRGILGINIGKNFDTPVERAVDDYLICLDKAYAHASYVTVNVSSPNTPGLRSLQFGDSLKQLLEALSLRQQELTQRHGKRVPLAIKIAPDMTDEETVLVAAALIESGMDAVIATNTTLSRQGVEGLPHGDEAGGLSGAPVREKSTHIVKVLAGELAGRMPIIAAGGITEGRHAAEKIAAGASLVQIYSGFIYKGPALIRQSVDAIAAMPRTAS.

Residues Ala-61–Lys-65 and Thr-85 each bind FMN. Substrate is bound at residue Lys-65. Position 110–114 (Asn-110–Phe-114) interacts with substrate. Positions 138 and 171 each coordinate FMN. Residue Asn-171 coordinates substrate. The active-site Nucleophile is the Ser-174. Asn-176 provides a ligand contact to substrate. Residues Lys-216 and Thr-244 each contribute to the FMN site. Asn-245–Thr-246 is a substrate binding site. FMN contacts are provided by residues Gly-267, Gly-296, and Tyr-317–Ser-318.

The protein belongs to the dihydroorotate dehydrogenase family. Type 2 subfamily. Monomer. Requires FMN as cofactor.

The protein localises to the cell membrane. It catalyses the reaction (S)-dihydroorotate + a quinone = orotate + a quinol. Its pathway is pyrimidine metabolism; UMP biosynthesis via de novo pathway; orotate from (S)-dihydroorotate (quinone route): step 1/1. Functionally, catalyzes the conversion of dihydroorotate to orotate with quinone as electron acceptor. This is Dihydroorotate dehydrogenase (quinone) from Pseudomonas syringae pv. tomato (strain ATCC BAA-871 / DC3000).